A 356-amino-acid chain; its full sequence is S-adenosylmethionine:tRNA ribosyltransferase-isomerase (356 aa).

It belongs to the QueA family. Monomer.

It localises to the cytoplasm. It catalyses the reaction 7-aminomethyl-7-carbaguanosine(34) in tRNA + S-adenosyl-L-methionine = epoxyqueuosine(34) in tRNA + adenine + L-methionine + 2 H(+). It functions in the pathway tRNA modification; tRNA-queuosine biosynthesis. In terms of biological role, transfers and isomerizes the ribose moiety from AdoMet to the 7-aminomethyl group of 7-deazaguanine (preQ1-tRNA) to give epoxyqueuosine (oQ-tRNA). The protein is S-adenosylmethionine:tRNA ribosyltransferase-isomerase of Nitrosospira multiformis (strain ATCC 25196 / NCIMB 11849 / C 71).